We begin with the raw amino-acid sequence, 373 residues long: Probable jasmonic acid carboxyl methyltransferase 2 (373 aa).

Residue Tyr-18 participates in S-adenosyl-L-homocysteine binding. Residue Gln-25 participates in jasmonate binding. Residues Cys-59, Asn-64, Asp-96, Leu-97, Ser-135, and Phe-136 each contribute to the S-adenosyl-L-homocysteine site. Jasmonate-binding residues include His-156 and Trp-157. 4 residues coordinate Mg(2+): Asn-174, Asp-260, Phe-262, and Asn-263.

Belongs to the methyltransferase superfamily. Type-7 methyltransferase family. Requires Mg(2+) as cofactor.

The protein resides in the cytoplasm. Its subcellular location is the nucleus. The catalysed reaction is jasmonate + S-adenosyl-L-methionine = methyl (-)-jasmonate + S-adenosyl-L-homocysteine. The protein operates within lipid metabolism; oxylipin biosynthesis. Functionally, catalyzes the methylation of jasmonate into methyljasmonate, a plant volatile that acts as an important cellular regulator mediating diverse developmental processes and defense responses. The sequence is that of Probable jasmonic acid carboxyl methyltransferase 2 from Theobroma cacao (Cacao).